The primary structure comprises 105 residues: MADWNGEYISPYAEHGKKSELVKKITVSIPLKVLKVLTDERTRRQVNNLRHATNSELLCEAFLHAYTGQPLPTDEDLRKDRPDDIPAEAKRLMTEMGIEFESYDE.

It belongs to the MetJ family. As to quaternary structure, homodimer.

Its subcellular location is the cytoplasm. This regulatory protein, when combined with SAM (S-adenosylmethionine) represses the expression of the methionine regulon and of enzymes involved in SAM synthesis. This chain is Met repressor, found in Vibrio cholerae serotype O1 (strain ATCC 39541 / Classical Ogawa 395 / O395).